We begin with the raw amino-acid sequence, 436 residues long: tRNA (guanine(37)-N(1))-methyltransferase 1 (436 aa).

S-adenosyl-L-methionine is bound by residues His-229, 277–278 (DL), and Asn-325.

The protein belongs to the class I-like SAM-binding methyltransferase superfamily. TRM5/TYW2 family. As to quaternary structure, monomer.

The protein localises to the mitochondrion matrix. Its subcellular location is the nucleus. It localises to the cytoplasm. The catalysed reaction is guanosine(37) in tRNA + S-adenosyl-L-methionine = N(1)-methylguanosine(37) in tRNA + S-adenosyl-L-homocysteine + H(+). In terms of biological role, specifically methylates the N1 position of guanosine-37 in various cytoplasmic and mitochondrial tRNAs. Methylation is not dependent on the nature of the nucleoside 5' of the target nucleoside. This is the first step in the biosynthesis of wybutosine (yW), a modified base adjacent to the anticodon of tRNAs and required for accurate decoding. The protein is tRNA (guanine(37)-N(1))-methyltransferase 1 of Phaeodactylum tricornutum (strain CCAP 1055/1).